We begin with the raw amino-acid sequence, 385 residues long: Flap endonuclease 1 (385 aa).

An N-domain region spans residues 1–104 (MGILGLSKLI…GELAKRAERR (104 aa)). D34 provides a ligand contact to Mg(2+). R47 and R70 together coordinate DNA. Mg(2+) is bound by residues D86, E158, E160, D179, and D181. The tract at residues 122–253 (GIEKFNRRLV…KRAIELINTY (132 aa)) is I-domain. E158 is a DNA binding site. G231 and D233 together coordinate DNA. Mg(2+) is bound at residue D233. An interaction with PCNA region spans residues 336-344 (TQVRLDSFF). The segment at 346 to 385 (TLPSTPNATNAAKRKAEEAKKSANNKKAKTSGGGRGRRPK) is disordered. Over residues 368–385 (ANNKKAKTSGGGRGRRPK) the composition is skewed to basic residues.

Belongs to the XPG/RAD2 endonuclease family. FEN1 subfamily. In terms of assembly, interacts with PCNA. Three molecules of FEN1 bind to one PCNA trimer with each molecule binding to one PCNA monomer. PCNA stimulates the nuclease activity without altering cleavage specificity. It depends on Mg(2+) as a cofactor. Phosphorylated. Phosphorylation upon DNA damage induces relocalization to the nuclear plasma.

The protein resides in the nucleus. It is found in the nucleolus. Its subcellular location is the nucleoplasm. The protein localises to the mitochondrion. Structure-specific nuclease with 5'-flap endonuclease and 5'-3' exonuclease activities involved in DNA replication and repair. During DNA replication, cleaves the 5'-overhanging flap structure that is generated by displacement synthesis when DNA polymerase encounters the 5'-end of a downstream Okazaki fragment. It enters the flap from the 5'-end and then tracks to cleave the flap base, leaving a nick for ligation. Also involved in the long patch base excision repair (LP-BER) pathway, by cleaving within the apurinic/apyrimidinic (AP) site-terminated flap. Acts as a genome stabilization factor that prevents flaps from equilibrating into structures that lead to duplications and deletions. Also possesses 5'-3' exonuclease activity on nicked or gapped double-stranded DNA, and exhibits RNase H activity. Also involved in replication and repair of rDNA and in repairing mitochondrial DNA. The chain is Flap endonuclease 1 from Drosophila melanogaster (Fruit fly).